The chain runs to 7354 residues: Microtubule-actin cross-linking factor 1, isoforms 1/2/3/4 (7354 aa).

Residues 1 to 47 (MSSSDEETLSERSCRSERSCRSERSYRSERSGSLSPCPPGDTLPWNL) form a disordered region. The tract at residues 1-295 (MSSSDEETLS…VITYVSSIYD (295 aa)) is actin-binding. A Phosphoserine modification is found at Ser-4. Residues 9-30 (LSERSCRSERSCRSERSYRSER) show a composition bias toward basic and acidic residues. Position 35 is a phosphoserine (Ser-35). Thr-42 carries the post-translational modification Phosphothreonine. The residue at position 57 (Ser-57) is a Phosphoserine. 2 Calponin-homology (CH) domains span residues 78 to 181 (RVQK…LHFQ) and 194 to 298 (MSAK…DAFP). An LRR 1 repeat occupies 148–171 (QRQVKLVNIRNDDITDGNPKLTLG). A Phosphoserine modification is found at Ser-280. LRR repeat units follow at residues 377-399 (LYKLLEVWIEFGRIKLPQGYHPN) and 441-464 (LNCEEKLTLAKNTLQADAAHLESG). The 58-residue stretch at 868 to 925 (KSTLSVKAICDYRQIEITICKNDECVLEDNSQRTKWKVISPTGNEAMVPSVCFLIPPP) folds into the SH3 domain. One copy of the LRR 5 repeat lies at 1050 to 1073 (ISELKNIRLLLEECEQRLLKQIQS). Ser-1122 bears the Phosphoserine mark. LRR repeat units follow at residues 1128–1154 (ATTLRSELNLMVEKMDHVYGLSTVYLN), 1187–1210 (PADLSALESHRTTLQHWLSDVKDK), and 1257–1282 (HRVIAQLETRQSEVESIQEVLRDYRA). Phosphoserine is present on residues Ser-1367 and Ser-1376. 5 Plectin repeats span residues 1577 to 1619 (LVLL…QLLG), 1654 to 1696 (LKVL…ELQS), 1769 to 1809 (RLLE…CAIL), 1811 to 1848 (RQLQTGGIIDTVTGDRMTIDEAVTNNLVAAKIALVILE), and 1855 to 1885 (GLLLPESGEILPITDALEQGIVSTELAHKIL). Phosphoserine is present on residues Ser-2051, Ser-2077, and Ser-2081. 2 stretches are compositionally biased toward basic and acidic residues: residues 2120–2131 (KEEQAETLREEN) and 2145–2155 (SEGKDLSTEKS). The interval 2120–2155 (KEEQAETLREENISGDPLLVECPEESEGKDLSTEKS) is disordered. Plectin repeat units lie at residues 2276-2316 (STLS…VKLM), 2352-2393 (NVLM…RILE), 2394-2425 (GQVITGGIVDLKRGKKLSVTLASNLGLVDTAD), 2487-2528 (LLTK…LRKV), and 2671-2715 (LKVL…ASHQ). Disordered regions lie at residues 2806-2841 (AGIRGSNGEKAEKGRKISVEMEGQRQDEKASSDSKV), 2951-2978 (EMGGEQSVQMSREAAVLSEEESDQEVTI), and 3058-3099 (SQET…HISK). Over residues 2812-2837 (NGEKAEKGRKISVEMEGQRQDEKASS) the composition is skewed to basic and acidic residues. The segment covering 2968–2978 (SEEESDQEVTI) has biased composition (acidic residues). A phosphoserine mark is found at Ser-3082 and Ser-3085. LRR repeat units lie at residues 3225-3244 (VGQRGPRVLASLLPEKLPTR), 3606-3630 (SGKSSLLCAEPKVDLKDLQGDIQSH), and 3657-3681 (LTALREKLHQAKEQYEVLQERTRVA). 2 Spectrin repeats span residues 3845 to 3920 (ELQK…NFEE) and 3962 to 4070 (QYQQ…ALLQ). Ser-3889 carries the phosphoserine modification. The stretch at 3898–3920 (KGDLRFVTISGQKVLETENNFEE) is one LRR 12 repeat. 2 LRR repeats span residues 4087–4112 (LQSIREVEQNLERDQVASLSSGVIQE) and 4223–4249 (IQELTLAMEDQKENLDTLEHLVTTLGS). One copy of the Spectrin 3 repeat lies at 4428–4536 (RMEEVQKEAS…TVARQKQLEE (109 aa)). A phosphoserine mark is found at Ser-4458 and Ser-4483. LRR repeat units lie at residues 4473 to 4496 (KAFLAELEQNSPKIQKVKEALAGL), 4563 to 4583 (GVLGPLSIDPNMLKQQVQFML), and 4728 to 4751 (KKRLETVALPLQGLEDLAADRMNR). The stretch at 4759–4863 (TQQFQQMFDE…KTANRQSRLK (105 aa)) is one Spectrin 4 repeat. Ser-4921 bears the Phosphoserine mark. 3 LRR repeats span residues 5010–5035 (NKNLEKLKAQQEVLQALEPQVDYLRN), 5131–5153 (NKIQALRFDIEDSEAECRKMLEE), and 5240–5263 (KDQVDPLQVKLQQVNGLGQGLIQS). 13 Spectrin repeats span residues 5195–5300 (EDFY…QLQE), 5307–5409 (KFQD…QLED), 5414–5506 (AKQF…ADIT), 5631–5735 (RSQQ…ARLE), 5742–5844 (NQFW…ALDE), 5961–6066 (LAEK…KLED), 6071–6175 (AVQY…HKLE), 6181–6284 (LGQF…QQLQ), 6289–6395 (QAQG…KLEE), 6400–6503 (ATEF…RSLD), 6508–6614 (RAKQ…KLEE), 6621–6722 (QFMD…RLEQ), and 6726–6830 (QAEE…QRLE). Thr-5394 bears the Phosphothreonine mark. LRR repeat units lie at residues 5654 to 5678 (MALGPIRLEQDQTTAQLQVQKAFSI) and 5763 to 5787 (AQLPPPAVDHEQLRQQQEEMRQLRE). Ser-5988 bears the Phosphoserine mark. Lys-6166 bears the N6-acetyllysine mark. An LRR 23 repeat occupies 6452 to 6475 (RDQIIELDQTGNQLKFLSQKQDVV). Positions 6904-6937 (SVEPTHAPFMEKSRSGSRKSLNQPTPPPMPILSQ) are disordered. Ser-6923 carries the phosphoserine modification. EF-hand domains follow at residues 7001–7036 (HKKSRVMDFFRRIDKDQDGKITRQEFIDGILASKFP) and 7037–7072 (TTKLEMTAVADIFDRDGDGYIDYYEFVAALHPNKDA). Residues Asp-7014, Asp-7016, Asp-7018, Lys-7020, Glu-7025, Asp-7050, Asp-7052, Asp-7054, Tyr-7056, and Glu-7061 each coordinate Ca(2+). Residues 7077–7155 (TDADKIEDEV…EFLVKNDPCR (79 aa)) form the GAR domain. Residues 7077 to 7354 (TDADKIEDEV…ASPRTPGPKR (278 aa)) are C-terminal tail. The disordered stretch occupies residues 7171-7354 (PEGASQGMTP…ASPRTPGPKR (184 aa)). Residues 7191–7225 (SSRAASPTRSSSSASQSNHSCTSMPSSPATPASGT) are compositionally biased toward low complexity. Residue Thr-7220 is modified to Phosphothreonine. Positions 7242-7261 (FHSSRTSLAGDTSNSSSPAS) are enriched in polar residues. Ser-7245 and Ser-7258 each carry phosphoserine. The span at 7276–7290 (SRPGSRAGSRAGSRA) shows a compositional bias: low complexity. The interval 7279-7294 (GSRAGSRAGSRASSRR) is 4 X 4 AA tandem repeats of [GS]-S-R-[AR]. Ser-7296 and Ser-7299 each carry phosphoserine. The span at 7305 to 7315 (ETQSACSDTSE) shows a compositional bias: polar residues. Residues 7316–7327 (SSAAGGQGSSRR) show a composition bias toward low complexity.

This sequence belongs to the plakin or cytolinker family. Interacts with AXIN1, LRP6 and GOLGA4. Found in a complex composed of MACF1, APC, AXIN1, CTNNB1 and GSK3B. Interacts with MAPRE1, CLASP1 and CLASP2. Interacts with CAMSAP3. In terms of processing, phosphorylated on serine residues in the C-terminal tail by GSK3B. Phosphorylation inhibits microtubule-binding and this plays a critical role in bulge stem cell migration and skin wound repair. Wnt-signaling can repress phosphorylation. In terms of tissue distribution, enriched in the hair follicle stem cells (at protein level). Isoform 1 and isoform 2 are ubiquitous expressed, with higher levels seen in lung, heart, thymus, spleen and brain.

Its subcellular location is the cytoplasm. The protein resides in the cytoskeleton. It localises to the golgi apparatus. It is found in the cell membrane. The protein localises to the cell projection. Its subcellular location is the ruffle membrane. Functionally, F-actin-binding protein which plays a role in cross-linking actin to other cytoskeletal proteins and also binds to microtubules. Plays an important role in ERBB2-dependent stabilization of microtubules at the cell cortex. Acts as a positive regulator of Wnt receptor signaling pathway and is involved in the translocation of AXIN1 and its associated complex (composed of APC, CTNNB1 and GSK3B) from the cytoplasm to the cell membrane. Has actin-regulated ATPase activity and is essential for controlling focal adhesions (FAs) assembly and dynamics. Interaction with CAMSAP3 at the minus ends of non-centrosomal microtubules tethers microtubules minus-ends to actin filaments, regulating focal adhesion size and cell migration. May play role in delivery of transport vesicles containing GPI-linked proteins from the trans-Golgi network through its interaction with GOLGA4. Plays a key role in wound healing and epidermal cell migration. Required for efficient upward migration of bulge cells in response to wounding and this function is primarily rooted in its ability to coordinate microtubule dynamics and polarize hair follicle stem cells. As a regulator of actin and microtubule arrangement and stabilization, it plays an essential role in neurite outgrowth, branching and spine formation during brain development. This chain is Microtubule-actin cross-linking factor 1, isoforms 1/2/3/4, found in Mus musculus (Mouse).